Consider the following 311-residue polypeptide: Ribonuclease HIII (311 aa).

In terms of domain architecture, RNase H type-2 spans 95–311 (MSIVGSDEVG…NTEKAFRLLK (217 aa)). Residues aspartate 101, glutamate 102, and aspartate 206 each contribute to the a divalent metal cation site.

This sequence belongs to the RNase HII family. RnhC subfamily. Mn(2+) serves as cofactor. Requires Mg(2+) as cofactor.

It localises to the cytoplasm. The catalysed reaction is Endonucleolytic cleavage to 5'-phosphomonoester.. In terms of biological role, endonuclease that specifically degrades the RNA of RNA-DNA hybrids. The protein is Ribonuclease HIII of Bacillus anthracis (strain A0248).